Reading from the N-terminus, the 430-residue chain is Gustatory receptor-like 43a (430 aa).

The Cytoplasmic portion of the chain corresponds to 1–31 (MSTGSHSPEAMWSATNFRRHQRKPNQVLHRW). The helical transmembrane segment at 32–52 (FFKGSAWIIYAIACGLHFFKL) threads the bilayer. At 53 to 79 (HYNERTNQVEESQYHRIWSKIVVVLKV) the chain is on the extracellular side. A helical transmembrane segment spans residues 80–100 (ILLASPYLQYFVLGLGIYIHI). Topologically, residues 101–110 (TLVQDSKAQN) are cytoplasmic. Residues 111 to 131 (FLMSLIVLGIVIGVLRRLLIF) traverse the membrane as a helical segment. Over 132 to 168 (LHLKRDRRFLKHTVNEILHITSALEQKFGMEYKCDST) the chain is Extracellular. A helical membrane pass occupies residues 169-189 (LLVVYLAKLWILTVMLDSLWY). Residues 190 to 277 (KPYFLSSIFL…RDNVSWLSTS (88 aa)) lie on the Cytoplasmic side of the membrane. A helical membrane pass occupies residues 278 to 298 (VYLMIFTCIFNAELLIECSLF). The Extracellular segment spans residues 299-306 (AGDELENK). A helical membrane pass occupies residues 307 to 327 (IYIITDGCLGPVCVPILYVLI). Topologically, residues 328–396 (LGMCTDRFRD…IILDITCDRE (69 aa)) are cytoplasmic. A helical transmembrane segment spans residues 397–417 (FVMDYIVTVILTALSLVQYTI). The Extracellular portion of the chain corresponds to 418–430 (STGGNISECVTHK). N-linked (GlcNAc...) asparagine glycosylation is present at Asn422.

It is found in the cell membrane. The polypeptide is Gustatory receptor-like 43a (Drosophila melanogaster (Fruit fly)).